Here is an 823-residue protein sequence, read N- to C-terminus: Putative ankyrin repeat domain-containing protein 20A2 (823 aa).

5 ANK repeats span residues 66–95 (QHRT…QIDV), 99–128 (ENRT…NPNL), 132–161 (YGNT…HIEA), 165–194 (DNNT…SSHA), and 198–227 (LRRS…DVFA). 2 disordered regions span residues 301 to 343 (VPEK…EVED) and 355 to 402 (VQTL…LSEN). Positions 372 to 384 (QERHERSEKKQPQ) are enriched in basic and acidic residues. Coiled coils occupy residues 431–480 (KKLK…KQLE), 565–724 (EMIT…NNST), and 776–805 (LVLE…EKTE).

The chain is Putative ankyrin repeat domain-containing protein 20A2 from Homo sapiens (Human).